The following is a 335-amino-acid chain: Putative D-threonate 4-phosphate dehydrogenase (335 aa).

Positions 140 and 141 each coordinate substrate. Positions 170, 214, and 269 each coordinate a divalent metal cation. Substrate contacts are provided by K277 and R295.

The protein belongs to the PdxA family. PdxA2 subfamily. As to quaternary structure, homodimer. A divalent metal cation serves as cofactor.

The enzyme catalyses 4-O-phospho-D-threonate + NAD(+) = dihydroxyacetone phosphate + CO2 + NADH. In terms of biological role, catalyzes the NAD-dependent oxidation and subsequent decarboxylation of D-threonate 4-phosphate to produce dihydroxyacetone phosphate (DHAP). The protein is Putative D-threonate 4-phosphate dehydrogenase of Symbiobacterium thermophilum (strain DSM 24528 / JCM 14929 / IAM 14863 / T).